The following is a 358-amino-acid chain: Homoserine O-acetyltransferase (358 aa).

The 303-residue stretch at 41–343 (NAVLICHALT…DYGHDAFLVD (303 aa)) folds into the AB hydrolase-1 domain. The active-site Nucleophile is Ser143. Substrate is bound at residue Arg212. Catalysis depends on residues Asp304 and His337. Residue Asp338 coordinates substrate.

Homodimer.

The protein resides in the cytoplasm. It catalyses the reaction L-homoserine + acetyl-CoA = O-acetyl-L-homoserine + CoA. It participates in amino-acid biosynthesis; L-methionine biosynthesis via de novo pathway; O-acetyl-L-homoserine from L-homoserine: step 1/1. Functionally, transfers an acetyl group from acetyl-CoA to L-homoserine, forming acetyl-L-homoserine. Utilizes a ping-pong kinetic mechanism in which the acetyl group of acetyl-CoA is initially transferred to the enzyme to form an acetyl-enzyme intermediate before subsequent transfer to homoserine to form the final product, O-acetylhomoserine. The chain is Homoserine O-acetyltransferase from Haemophilus influenzae (strain ATCC 51907 / DSM 11121 / KW20 / Rd).